The sequence spans 430 residues: Adenylosuccinate synthetase (430 aa).

GTP-binding positions include 12–18 (GDEGKGK) and 40–42 (GHT). The active-site Proton acceptor is the Asp-13. The Mg(2+) site is built by Asp-13 and Gly-40. IMP-binding positions include 13–16 (DEGK), 38–41 (NAGH), Thr-129, Arg-143, Gln-224, Thr-239, and Arg-303. The Proton donor role is filled by His-41. Substrate is bound at residue 299 to 305 (TVSNRER). Residues Arg-305, 331 to 333 (KLD), and 413 to 415 (STG) contribute to the GTP site.

It belongs to the adenylosuccinate synthetase family. As to quaternary structure, homodimer. Mg(2+) serves as cofactor.

Its subcellular location is the cytoplasm. It catalyses the reaction IMP + L-aspartate + GTP = N(6)-(1,2-dicarboxyethyl)-AMP + GDP + phosphate + 2 H(+). Its pathway is purine metabolism; AMP biosynthesis via de novo pathway; AMP from IMP: step 1/2. Plays an important role in the de novo pathway of purine nucleotide biosynthesis. Catalyzes the first committed step in the biosynthesis of AMP from IMP. The polypeptide is Adenylosuccinate synthetase (Ehrlichia ruminantium (strain Gardel)).